The following is a 301-amino-acid chain: Ribosomal protein L11 methyltransferase (301 aa).

S-adenosyl-L-methionine-binding residues include threonine 130, glycine 151, aspartate 172, and asparagine 239.

The protein belongs to the methyltransferase superfamily. PrmA family.

It localises to the cytoplasm. It carries out the reaction L-lysyl-[protein] + 3 S-adenosyl-L-methionine = N(6),N(6),N(6)-trimethyl-L-lysyl-[protein] + 3 S-adenosyl-L-homocysteine + 3 H(+). In terms of biological role, methylates ribosomal protein L11. The chain is Ribosomal protein L11 methyltransferase from Campylobacter hominis (strain ATCC BAA-381 / DSM 21671 / CCUG 45161 / LMG 19568 / NCTC 13146 / CH001A).